A 407-amino-acid chain; its full sequence is uncharacterized protein (407 aa).

Residues 145-231 (EANRFGRSNS…DPLTSITSDT (87 aa)) are disordered. Over residues 158 to 175 (SNSRSKSSRSRSNNRSKS) the composition is skewed to basic residues. Residues 176–196 (SRSSSTQSKSNNRSNSRSNSK) are compositionally biased toward low complexity. An N-acetyltransferase domain is found at 271 to 407 (IVFETLDQND…NHKIHMEKDI (137 aa)).

It is found in the virion. This is an uncharacterized protein from Acanthamoeba polyphaga (Amoeba).